Consider the following 324-residue polypeptide: Bile salt hydrolase/transferase (324 aa).

Residue Cys2 is the Nucleophile; acyl-thioester intermediate of the active site. Deoxycholate-binding residues include Cys2 and Arg16. Asn79 is a binding site for taurine.

The protein belongs to the peptidase C59 family. As to quaternary structure, homotetramer. The tetramer consists of a dimer of dimers.

It catalyses the reaction glycocholate + H2O = cholate + glycine. The enzyme catalyses glycodeoxycholate + H2O = deoxycholate + glycine. The catalysed reaction is chenodeoxycholate + glycine = glycochenodeoxycholate + H2O. It carries out the reaction cholate + taurine = taurocholate + H2O. It catalyses the reaction taurodeoxycholate + H2O = deoxycholate + taurine. The enzyme catalyses taurochenodeoxycholate + H2O = chenodeoxycholate + taurine. The catalysed reaction is an L-alpha-amino acid + cholate = an N-choloyl-L-alpha-amino acid + H2O. It carries out the reaction an L-alpha-amino acid + taurocholate = an N-choloyl-L-alpha-amino acid + taurine. It catalyses the reaction glycocholate + an L-alpha-amino acid = an N-choloyl-L-alpha-amino acid + glycine. It functions in the pathway lipid metabolism; bile acid biosynthesis. In terms of biological role, possesses dual functions in bile acid metabolism. Acts as a bile salt hydrolase that catalyzes the deconjugation of glycine- and taurine-linked bile salts, which occurs naturally in the intestines of animals, releasing amino acid residues and deconjugated bile salts (bile acids). Can hydrolyze the amide bond in the bile salts glycocholate (GCA), glycodeoxycholate (GDCA), glycochenodeoxycholate (GCDCA), taurocholate (TCA), taurodeoxycholate (TDCA) and taurochenodeoxycholate (TCDCA). Shows a preference for glycine-conjugated bile acids as substrates. Also acts as an amine N-acyltransferase that conjugates a wide variety of amino acids to conjugated and non-conjugated bile acids, thus producing bacterial bile acid amidates (BBAAs) - also named microbially conjugated bile acids (MCBAs) - in the gastrointestinal tract. These BBAAs may facilitate communication between the microbiota and host through the activation of host ligand-activated transcription factors. The polypeptide is Bile salt hydrolase/transferase (Lactiplantibacillus plantarum (strain ATCC BAA-793 / NCIMB 8826 / WCFS1) (Lactobacillus plantarum)).